Consider the following 342-residue polypeptide: Galactose mutarotase (342 aa).

S14 carries the phosphoserine modification. Beta-D-galactose contacts are provided by residues 81-82 (NR) and H107. Residue S124 is modified to Phosphoserine. H176 serves as the catalytic Proton donor. Beta-D-galactose-binding positions include 176-178 (HSY), D243, Q279, and E307. E307 serves as the catalytic Proton acceptor.

The protein belongs to the aldose epimerase family. In terms of assembly, monomer.

It localises to the cytoplasm. The enzyme catalyses alpha-D-galactose = beta-D-galactose. The catalysed reaction is alpha-D-glucose = beta-D-glucose. It functions in the pathway carbohydrate metabolism; hexose metabolism. Its pathway is carbohydrate metabolism; galactose metabolism. Mutarotase that catalyzes the interconversion of beta-D-galactose and alpha-D-galactose during galactose metabolism. Beta-D-galactose is metabolized in the liver into glucose 1-phosphate, the primary metabolic fuel, by the action of four enzymes that constitute the Leloir pathway: GALM, GALK1 (galactokinase), GALT (galactose-1-phosphate uridylyltransferase) and GALE (UDP-galactose-4'-epimerase). Involved in the maintenance of the equilibrium between the beta- and alpha-anomers of galactose, therefore ensuring a sufficient supply of the alpha-anomer for GALK1. Also active on D-glucose although shows a preference for galactose over glucose. This is Galactose mutarotase (Galm) from Rattus norvegicus (Rat).